A 986-amino-acid chain; its full sequence is Translation initiation factor IF-2 (986 aa).

Positions 75-94 (KRLSRLEEQSRKTYEKEQHL) are enriched in basic and acidic residues. Disordered regions lie at residues 75 to 105 (KRLS…APPL), 127 to 148 (PPSK…PDAP), 185 to 258 (SEVP…VSFD), and 277 to 394 (GRHK…HEED). Low complexity-rich tracts occupy residues 185–210 (SEVP…ESPL) and 218–235 (SEPQ…LPEI). Residues 292–313 (DALKDEFEPKPAEESRVEEKVV) are compositionally biased toward basic and acidic residues. Positions 315-338 (AKKPPVKAAADVKPKPVVADSSSS) are enriched in low complexity. Residues 339-348 (AKKKGKKKKK) show a composition bias toward basic residues. Residues 483–653 (TRPPVVTIMG…LTEAEMRELR (171 aa)) enclose the tr-type G domain. A G1 region spans residues 492 to 499 (GHVDHGKT). Residue 492–499 (GHVDHGKT) coordinates GTP. Residues 517-521 (GITQH) form a G2 region. The G3 stretch occupies residues 539–542 (DTPG). GTP contacts are provided by residues 539-543 (DTPGH) and 593-596 (NKID). A G4 region spans residues 593-596 (NKID). Residues 629–631 (SAK) are G5.

This sequence belongs to the TRAFAC class translation factor GTPase superfamily. Classic translation factor GTPase family. IF-2 subfamily.

The protein localises to the cytoplasm. One of the essential components for the initiation of protein synthesis. Protects formylmethionyl-tRNA from spontaneous hydrolysis and promotes its binding to the 30S ribosomal subunits. Also involved in the hydrolysis of GTP during the formation of the 70S ribosomal complex. The protein is Translation initiation factor IF-2 of Pelodictyon phaeoclathratiforme (strain DSM 5477 / BU-1).